We begin with the raw amino-acid sequence, 719 residues long: Phosphoribosylformylglycinamidine synthase subunit PurL (719 aa).

Histidine 45 is a catalytic residue. 2 residues coordinate ATP: tyrosine 48 and lysine 87. Residue glutamate 89 participates in Mg(2+) binding. Residues 90–93 (SHNH) and arginine 112 contribute to the substrate site. The Proton acceptor role is filled by histidine 91. A Mg(2+)-binding site is contributed by aspartate 113. Position 236 (glutamine 236) interacts with substrate. Aspartate 264 contacts Mg(2+). 308 to 310 (ESQ) serves as a coordination point for substrate. The ATP site is built by asparagine 493 and glycine 530. Residue asparagine 531 participates in Mg(2+) binding. Serine 533 lines the substrate pocket.

Belongs to the FGAMS family. In terms of assembly, monomer. Part of the FGAM synthase complex composed of 1 PurL, 1 PurQ and 2 PurS subunits.

The protein resides in the cytoplasm. It carries out the reaction N(2)-formyl-N(1)-(5-phospho-beta-D-ribosyl)glycinamide + L-glutamine + ATP + H2O = 2-formamido-N(1)-(5-O-phospho-beta-D-ribosyl)acetamidine + L-glutamate + ADP + phosphate + H(+). It participates in purine metabolism; IMP biosynthesis via de novo pathway; 5-amino-1-(5-phospho-D-ribosyl)imidazole from N(2)-formyl-N(1)-(5-phospho-D-ribosyl)glycinamide: step 1/2. Functionally, part of the phosphoribosylformylglycinamidine synthase complex involved in the purines biosynthetic pathway. Catalyzes the ATP-dependent conversion of formylglycinamide ribonucleotide (FGAR) and glutamine to yield formylglycinamidine ribonucleotide (FGAM) and glutamate. The FGAM synthase complex is composed of three subunits. PurQ produces an ammonia molecule by converting glutamine to glutamate. PurL transfers the ammonia molecule to FGAR to form FGAM in an ATP-dependent manner. PurS interacts with PurQ and PurL and is thought to assist in the transfer of the ammonia molecule from PurQ to PurL. This Novosphingobium aromaticivorans (strain ATCC 700278 / DSM 12444 / CCUG 56034 / CIP 105152 / NBRC 16084 / F199) protein is Phosphoribosylformylglycinamidine synthase subunit PurL.